The chain runs to 103 residues: Alkanal monooxygenase alpha chain (103 aa).

As to quaternary structure, heterodimer of an alpha and a beta chain.

The enzyme catalyses a long-chain fatty aldehyde + FMNH2 + O2 = a long-chain fatty acid + hnu + FMN + H2O + 2 H(+). Its function is as follows. Light-emitting reaction in luminous bacteria. The sequence is that of Alkanal monooxygenase alpha chain (luxA) from Vibrio cholerae.